We begin with the raw amino-acid sequence, 252 residues long: 3-dehydroquinate dehydratase (252 aa).

3-dehydroquinate contacts are provided by residues 47-49 (EWR) and R83. H144 functions as the Proton donor/acceptor in the catalytic mechanism. The Schiff-base intermediate with substrate role is filled by K171. Residues R213, S232, and Q236 each coordinate 3-dehydroquinate.

The protein belongs to the type-I 3-dehydroquinase family. As to quaternary structure, homodimer.

It catalyses the reaction 3-dehydroquinate = 3-dehydroshikimate + H2O. Its pathway is metabolic intermediate biosynthesis; chorismate biosynthesis; chorismate from D-erythrose 4-phosphate and phosphoenolpyruvate: step 3/7. Involved in the third step of the chorismate pathway, which leads to the biosynthesis of aromatic amino acids. Catalyzes the cis-dehydration of 3-dehydroquinate (DHQ) and introduces the first double bond of the aromatic ring to yield 3-dehydroshikimate. This Lactiplantibacillus plantarum (strain ATCC BAA-793 / NCIMB 8826 / WCFS1) (Lactobacillus plantarum) protein is 3-dehydroquinate dehydratase.